The primary structure comprises 387 residues: Erythronate-4-phosphate dehydrogenase (387 aa).

Substrate is bound by residues S45 and T67. D147 is a binding site for NAD(+). R208 is an active-site residue. D232 serves as a coordination point for NAD(+). E237 is a catalytic residue. The Proton donor role is filled by H254. NAD(+) is bound at residue G257. Residue Y258 coordinates substrate.

The protein belongs to the D-isomer specific 2-hydroxyacid dehydrogenase family. PdxB subfamily. As to quaternary structure, homodimer.

The protein resides in the cytoplasm. The catalysed reaction is 4-phospho-D-erythronate + NAD(+) = (R)-3-hydroxy-2-oxo-4-phosphooxybutanoate + NADH + H(+). The protein operates within cofactor biosynthesis; pyridoxine 5'-phosphate biosynthesis; pyridoxine 5'-phosphate from D-erythrose 4-phosphate: step 2/5. Catalyzes the oxidation of erythronate-4-phosphate to 3-hydroxy-2-oxo-4-phosphonooxybutanoate. The chain is Erythronate-4-phosphate dehydrogenase from Shewanella sediminis (strain HAW-EB3).